The chain runs to 274 residues: Exosome complex component RRP40 (274 aa).

Position 2 is an N-acetylalanine (alanine 2). Lysine 150 is covalently cross-linked (Glycyl lysine isopeptide (Lys-Gly) (interchain with G-Cter in SUMO2)).

Belongs to the RRP40 family. Component of the RNA exosome core complex (Exo-9), composed of EXOSC1, EXOSC2, EXOSC3, EXOSC4, EXOSC5, EXOSC6, EXOSC7, EXOSC8 and EXOSC9; within the complex interacts with EXOSC5 and EXOSC9. The catalytically inactive RNA exosome core complex (Exo-9) associates with the catalytic subunit EXOSC10/RRP6. Exo-9 may associate with DIS3 to form the nucleolar exosome complex, or DIS3L to form the cytoplasmic exosome complex. Exo-9 is formed by a hexameric base ring consisting of the heterodimers EXOSC4-EXOSC9, EXOSC5-EXOSC8 and EXOSC6-EXOSC7, and a cap ring consisting of EXOSC1, EXOSC2 and EXOSC3. The RNA exosome complex associates with cofactors C1D/RRP47, MPHOSPH6/MPP6 and MTREX/MTR4. Interacts with MPHOSPH6/MPP6; the interaction is direct. Interacts with GTPBP1. Interacts with ZC3HAV1. Interacts with DDX17 only in the presence of ZC3HAV1 in an RNA-independent manner. Interacts with DHX36; this interaction occurs in a RNase-insensitive manner. Interacts with HBS1L isoform 2.

The protein localises to the cytoplasm. Its subcellular location is the nucleus. It localises to the nucleolus. Functionally, non-catalytic component of the RNA exosome complex which has 3'-&gt;5' exoribonuclease activity and participates in a multitude of cellular RNA processing and degradation events. In the nucleus, the RNA exosome complex is involved in proper maturation of stable RNA species such as rRNA, snRNA and snoRNA, in the elimination of RNA processing by-products and non-coding 'pervasive' transcripts, such as antisense RNA species and promoter-upstream transcripts (PROMPTs), and of mRNAs with processing defects, thereby limiting or excluding their export to the cytoplasm. The RNA exosome may be involved in Ig class switch recombination (CSR) and/or Ig variable region somatic hypermutation (SHM) by targeting AICDA deamination activity to transcribed dsDNA substrates. In the cytoplasm, the RNA exosome complex is involved in general mRNA turnover and specifically degrades inherently unstable mRNAs containing AU-rich elements (AREs) within their 3' untranslated regions, and in RNA surveillance pathways, preventing translation of aberrant mRNAs. It seems to be involved in degradation of histone mRNA. The catalytic inactive RNA exosome core complex of 9 subunits (Exo-9) is proposed to play a pivotal role in the binding and presentation of RNA for ribonucleolysis, and to serve as a scaffold for the association with catalytic subunits and accessory proteins or complexes. EXOSC3 as peripheral part of the Exo-9 complex stabilizes the hexameric ring of RNase PH-domain subunits through contacts with EXOSC9 and EXOSC5. The protein is Exosome complex component RRP40 (Exosc3) of Mus musculus (Mouse).